A 244-amino-acid polypeptide reads, in one-letter code: Ribosomal RNA small subunit methyltransferase G (244 aa).

S-adenosyl-L-methionine contacts are provided by residues G84, F89, 107 to 109 (DST), 135 to 136 (AE), and R154.

This sequence belongs to the methyltransferase superfamily. RNA methyltransferase RsmG family.

It localises to the cytoplasm. Functionally, specifically methylates the N7 position of a guanine in 16S rRNA. This is Ribosomal RNA small subunit methyltransferase G from Nostoc punctiforme (strain ATCC 29133 / PCC 73102).